We begin with the raw amino-acid sequence, 476 residues long: Protein Cep89 homolog (476 aa).

2 disordered regions span residues 1-29 and 172-193; these read MSTR…KKNR and LGEG…APYP. The segment covering 180–190 has biased composition (polar residues); sequence GGSTKVSSSSA.

It localises to the cytoplasm. Its subcellular location is the cytosol. The protein resides in the mitochondrion intermembrane space. In terms of biological role, required for mitochondrial complex IV activity. May be involved in non-associative learning. The chain is Protein Cep89 homolog (Cep89) from Drosophila melanogaster (Fruit fly).